A 782-amino-acid chain; its full sequence is Tripartite terminase subunit 1 (782 aa).

Residues 190–218 (CLQCYEELAAVPNQGRSILKRLRGLLCDH) form a C3H1-type zinc finger. 666 to 673 (YNEAFGKE) is a binding site for ATP. The segment covering 727 to 740 (APPPPAAPSPPPAE) has biased composition (pro residues). The interval 727 to 754 (APPPPAAPSPPPAEPATTAGASRKRPAV) is disordered.

Belongs to the herpesviridae TRM1 protein family. As to quaternary structure, associates with TRM2 and TRM3 to form the tripartite terminase complex. Interacts with portal protein.

It is found in the host nucleus. Functionally, component of the molecular motor that translocates viral genomic DNA in empty capsid during DNA packaging. Forms a tripartite terminase complex together with TRM2 and TRM3 in the host cytoplasm. Once the complex reaches the host nucleus, it interacts with the capsid portal vertex. This portal forms a ring in which genomic DNA is translocated into the capsid. TRM1 carries an endonuclease activity that plays an important role for the cleavage of concatemeric viral DNA into unit length genomes. This is Tripartite terminase subunit 1 from Tupaiid herpesvirus (strain 2) (TuHV-2).